Consider the following 176-residue polypeptide: MNKDDDKEGLAMFSALIDGIKPITQNKRHFRTPIKTKQEIELKEQQLHANSYFSDTYQPLLPVQGPMRWLEEGVDSLELKRLRRGDYQPDLLLDLHGYRQSEAKLELAALIQACVKQQSLCCCIMHGYGSGILKQQVPMWLVQHPMVKAFHQAPKEWGGDAALLVLIDIGEQPHRR.

The 76-residue stretch at 93–168 (LDLHGYRQSE…GDAALLVLID (76 aa)) folds into the Smr domain.

This sequence belongs to the SmrB family. Associates with collided ribosomes, but not with correctly translating polysomes.

In terms of biological role, acts as a ribosome collision sensor. Detects stalled/collided disomes (pairs of ribosomes where the leading ribosome is stalled and a second ribosome has collided with it) and endonucleolytically cleaves mRNA at the 5' boundary of the stalled ribosome. Stalled/collided disomes form a new interface (primarily via the 30S subunits) that binds SmrB. Cleaved mRNA becomes available for tmRNA ligation, leading to ribosomal subunit dissociation and rescue of stalled ribosomes. This is Ribosome rescue factor SmrB from Shewanella baltica (strain OS155 / ATCC BAA-1091).